A 664-amino-acid polypeptide reads, in one-letter code: Methionine--tRNA ligase (664 aa).

Positions 15–25 (YYPSGKAHIGH) match the 'HIGH' region motif. The 'KMSKS' region signature appears at 310–314 (KMSKS). Residue K313 participates in ATP binding. In terms of domain architecture, tRNA-binding spans 563-664 (DFDKIDLRVA…SALPNGAKVK (102 aa)).

It belongs to the class-I aminoacyl-tRNA synthetase family. MetG type 2B subfamily. As to quaternary structure, homodimer.

Its subcellular location is the cytoplasm. It carries out the reaction tRNA(Met) + L-methionine + ATP = L-methionyl-tRNA(Met) + AMP + diphosphate. Is required not only for elongation of protein synthesis but also for the initiation of all mRNA translation through initiator tRNA(fMet) aminoacylation. This Listeria innocua serovar 6a (strain ATCC BAA-680 / CLIP 11262) protein is Methionine--tRNA ligase (metG).